The primary structure comprises 586 residues: NudC domain-containing protein 1 (586 aa).

Residues 275-364 (KREPLYNWQQ…EPGCTWAELV (90 aa)) enclose the CS domain.

Its subcellular location is the cytoplasm. It is found in the nucleus. The chain is NudC domain-containing protein 1 from Xenopus laevis (African clawed frog).